Consider the following 1373-residue polypeptide: MFSTRISGDMKIFAADVAESSVTATCNTSVQQQQSQQLEFRTRMSAGSPSSKSGQCHLKFGKYNNKTANLLRQVNSCHSSNSSSNTSNNNNEAIKGQQQQPLHYCNSNNSHSWARKKYFGNGNSNNSLLQQQQQPSSFFQRQQQQHQMQMQQEKQATNNNDALMKNQNVVNAHVSDCKSSDSNNNSTSSSNNNSTISSNNNNTSSASNNNTGSSSSCSNRTKPAKWLNENSSSSSSSNNNNISCRNNNTSSIDTKRRNSSAGATAAYYRKSESESGSSEGAAESTETEATRTGGCNSNRTAESSSADGGTQATMGKSQDQEQDQTVKQRPRQQPLSFWKTNYPQTSATQLKDKETVAAVVSAAAVAAAAAAASASEQQQQQQSLSIEHRRNSGYQQHQQHNYYPYYYSQPKQLTIASFLQKEMLPDSTEKSSSNTGGSNMIRSSSNGNSNFSRHQYGHQSTGSGYQQQQQRYRNAQNVYQQYQHQQQHHAQQHTHPHFRRKHSDNGSGINKKMHYSPPGKSGDPADRSASGQQQHHHPHQQQKTIEILASSHFNAMHRRMQGGNNKNGYYQHSYNPMTGEVGSTPTRSEHQNIYNLTYIHVDTEATGEAASAAGSTPVVKPSLLSKPNISITPASSTTPTTVDRALLPAVRSVSAPASGSALPAPANHVRNMFPPPPLAMLGGHGLLSPVTTTTPTKMISCAQLDEAITAAAASGDKLSTSPSYNQAGHYIMPPQQQQQQQLSSHPIPTGTSSHPPPPPPPHMFFHFADGFCNPGQGHQAPPATMWPHSSSPCYPASYGSSCGSGTGAGTSPHNNDGNAGALRPASPALSSSSLGSESQWSGTSNRSRLGHNGHPSISPTPSALGSAQLSPHLAEMRVQHPLHQQHPPSHASHRPHGQMGGHAMSSYVPHRPPPPPHPSISSPNPTPVATGAGGPWYEMILPPDRYLAQARNIEVTVQPEKLICMCKYDNLSAEIWKRFRGAQQTHNKFKLKMRLWRYLYLWMHQPMFERYRICLVGSTITGFGTDSSDIDMCLLPEQGVHPHQHQYHQHHHFHNEKRTEALIILTLFNAVLKDTEVFQDFNLIEARVPILRFKDISNGIEVDLNFNNCVGIKNTYLLQLYAQMDWRTRPLVVIVKLWAQYHDINDAKRMTISSYSLVLMVLHYLQHACVPHVLPCLHSLYPEKFQLGQQDCLDLDLIEPIEPYQALNTQTLGEHLLGFFKYYSTFDFRNFAISIRTGGVLPVSTCRMAKSPKNDVYQWKELNIEEPFDLSNTARSVYDGPTFERVKAVFLISARRLDHTLDLATIFRPIHHVPEHFPQLQQHQQQFEQQLHHPISGQQRSAGGGGDGANPVPSTLNPDAASTFAETTAAHVA.

Residues 75 to 91 (NSCHSSNSSSNTSNNNN) show a composition bias toward low complexity. 6 disordered regions span residues 75-155 (NSCH…QEKQ), 175-340 (SDCK…FWKT), 425-543 (PDST…QQQK), 734-770 (PQQQ…FADG), 802-866 (CGSG…ALGS), and 880-928 (HPLH…PTPV). Residues 96-112 (GQQQQPLHYCNSNNSHS) show a composition bias toward polar residues. Low complexity-rich tracts occupy residues 130 to 152 (QQQQ…QMQQ), 180 to 219 (SDSN…SCSN), 228 to 251 (NENS…NTSS), and 274 to 284 (ESGSSEGAAES). 2 stretches are compositionally biased toward polar residues: residues 295–340 (CNSN…FWKT) and 430–442 (KSSS…NMIR). A compositionally biased stretch (low complexity) spans 443–485 (SSSNGNSNFSRHQYGHQSTGSGYQQQQQRYRNAQNVYQQYQHQ). Basic residues predominate over residues 486–502 (QQHHAQQHTHPHFRRKH). 2 stretches are compositionally biased toward low complexity: residues 735-753 (QQQQ…GTSS) and 819-844 (AGAL…SGTS). The segment covering 855 to 866 (PSISPTPSALGS) has biased composition (polar residues). Over residues 880–890 (HPLHQQHPPSH) the composition is skewed to low complexity. Positions 945-1373 (RYLAQARNIE…FAETTAAHVA (429 aa)) are sufficent for interaction with Dcr-2. Residues aspartate 1029 and aspartate 1031 each coordinate Mg(2+). One can recognise a PAP-associated domain in the interval 1211 to 1272 (TLGEHLLGFF…NIEEPFDLSN (62 aa)). The segment covering 1320 to 1341 (LQQHQQQFEQQLHHPISGQQRS) has biased composition (low complexity). The disordered stretch occupies residues 1320–1359 (LQQHQQQFEQQLHHPISGQQRSAGGGGDGANPVPSTLNPD).

Belongs to the DNA polymerase type-B-like family. GLD2 subfamily. In terms of assembly, interacts with orb, an RNA-binding protein, generating an ovarian cytoplasmic polyadenylation complex. Interacts (via C-terminus) with Dcr-2. Requires Mg(2+) as cofactor. Mn(2+) is required as a cofactor. Expressed in ovaries. Not expressed in adult males.

Its subcellular location is the cytoplasm. It catalyses the reaction RNA(n) + ATP = RNA(n)-3'-adenine ribonucleotide + diphosphate. Cytoplasmic poly(A) RNA polymerase that adds successive AMP monomers to the 3'-end of specific maternal RNAs (bcd, Tl, and tor), forming a poly(A) tail, during late oogenesis and early embryogenesis. In contrast to the canonical nuclear poly(A) RNA polymerase, it only adds poly(A) to selected cytoplasmic mRNAs. Required for localization of mRNAs to both poles of the egg, to recruit or maintain known centrosomal proteins with two types of microtubule organizing centers (MTOCs): the central MTOC that forms between the meiosis II tandem spindles and the centrosomes of the mitotic spindle. Required at the final stage of oogenesis for meiosis I metaphase arrest and for progression beyond this stage. Functions with the RNA-binding protein Dcr-2 to promote cytoplasmic polyadenylation and translational activation of certain mRNAs such as Tl and r2d2. As a consequence, is involved in regulating Toll immune signaling and promoting resistance to fungal infection. The protein is Poly(A) RNA polymerase gld-2 homolog B (wisp) of Drosophila melanogaster (Fruit fly).